Reading from the N-terminus, the 218-residue chain is dTTP/UTP pyrophosphatase (218 aa).

Residues 1–10 are compositionally biased toward polar residues; sequence MTASPSSAEG. A disordered region spans residues 1-20; it reads MTASPSSAEGSSGLPDRPKL. Asp-87 acts as the Proton acceptor in catalysis.

Belongs to the Maf family. YhdE subfamily. It depends on a divalent metal cation as a cofactor.

Its subcellular location is the cytoplasm. It carries out the reaction dTTP + H2O = dTMP + diphosphate + H(+). The enzyme catalyses UTP + H2O = UMP + diphosphate + H(+). Functionally, nucleoside triphosphate pyrophosphatase that hydrolyzes dTTP and UTP. May have a dual role in cell division arrest and in preventing the incorporation of modified nucleotides into cellular nucleic acids. This Gluconobacter oxydans (strain 621H) (Gluconobacter suboxydans) protein is dTTP/UTP pyrophosphatase.